Reading from the N-terminus, the 226-residue chain is Enolase-phosphatase E1 (226 aa).

It belongs to the HAD-like hydrolase superfamily. MasA/MtnC family. As to quaternary structure, monomer. Mg(2+) is required as a cofactor.

It catalyses the reaction 5-methylsulfanyl-2,3-dioxopentyl phosphate + H2O = 1,2-dihydroxy-5-(methylsulfanyl)pent-1-en-3-one + phosphate. It participates in amino-acid biosynthesis; L-methionine biosynthesis via salvage pathway; L-methionine from S-methyl-5-thio-alpha-D-ribose 1-phosphate: step 3/6. The protein operates within amino-acid biosynthesis; L-methionine biosynthesis via salvage pathway; L-methionine from S-methyl-5-thio-alpha-D-ribose 1-phosphate: step 4/6. In terms of biological role, bifunctional enzyme that catalyzes the enolization of 2,3-diketo-5-methylthiopentyl-1-phosphate (DK-MTP-1-P) into the intermediate 2-hydroxy-3-keto-5-methylthiopentenyl-1-phosphate (HK-MTPenyl-1-P), which is then dephosphorylated to form the acireductone 1,2-dihydroxy-3-keto-5-methylthiopentene (DHK-MTPene). This chain is Enolase-phosphatase E1, found in Shewanella pealeana (strain ATCC 700345 / ANG-SQ1).